The following is a 61-amino-acid chain: Large ribosomal subunit protein uL30 (61 aa).

The protein belongs to the universal ribosomal protein uL30 family. As to quaternary structure, part of the 50S ribosomal subunit.

This chain is Large ribosomal subunit protein uL30, found in Nitrosomonas europaea (strain ATCC 19718 / CIP 103999 / KCTC 2705 / NBRC 14298).